Reading from the N-terminus, the 647-residue chain is ATP-binding protein Uup (647 aa).

ABC transporter domains follow at residues 1–253 (MALI…RVEA) and 320–546 (FEME…AKAK). ATP contacts are provided by residues 36-43 (GRNGAGKS) and 352-359 (GPNGCGKT). The span at 545–563 (AKKSEPLKEESAVKNDRTS) shows a compositional bias: basic and acidic residues. Residues 545–569 (AKKSEPLKEESAVKNDRTSKPKSVK) are disordered. The tract at residues 559–647 (NDRTSKPKSV…EKKNLVEGKA (89 aa)) is C-terminal domain (CTD), binds DNA.

Belongs to the ABC transporter superfamily. ABCF family. Uup subfamily.

The protein localises to the cytoplasm. It carries out the reaction ATP + H2O = ADP + phosphate + H(+). In terms of biological role, probably plays a role in ribosome assembly or function. May be involved in resolution of branched DNA intermediates that result from template switching in postreplication gaps. Binds DNA and has ATPase activity. The protein is ATP-binding protein Uup of Haemophilus influenzae (strain ATCC 51907 / DSM 11121 / KW20 / Rd).